The following is a 1837-amino-acid chain: Nucleoporin nup211 (1837 aa).

Coiled coils occupy residues 59-378 (EVNY…YDEI), 415-519 (YKQK…ELDL), and 559-625 (VFRN…QLRY). Thr650 is modified (phosphothreonine). Coiled-coil stretches lie at residues 661 to 1163 (EQTS…NKLL), 1222 to 1637 (LDNR…ENTH), and 1675 to 1712 (KAKI…PEKT). Residues 1464-1521 (KDSNHQLQESASSDAEQITKEQFEQLKSEKERTEKELADSKNELEHLQSEAVDADGKT) are disordered. Over residues 1468 to 1479 (HQLQESASSDAE) the composition is skewed to polar residues. The span at 1480–1521 (QITKEQFEQLKSEKERTEKELADSKNELEHLQSEAVDADGKT) shows a compositional bias: basic and acidic residues. Ser1558 is subject to Phosphoserine. At Thr1560 the chain carries Phosphothreonine. A Phosphoserine modification is found at Ser1563. Disordered regions lie at residues 1602-1642 (EKEK…NIDD) and 1700-1837 (ENLN…KKAK). A compositionally biased stretch (basic and acidic residues) spans 1617–1628 (KSQRIKELEEQA). Composition is skewed to polar residues over residues 1700–1730 (ENLN…SKPT), 1753–1763 (KSLSARLQGTG), 1795–1814 (IATS…TAKS), and 1827–1837 (GGSSSNQKKAK).

It is found in the cytoplasm. The protein resides in the nucleus. In terms of biological role, functions as a component of the nuclear pore complex (NPC). NPC components, collectively referred to as nucleoporins (NUPs), can play the role of both NPC structural components and of docking or interaction partners for transiently associated nuclear transport factors. Active directional transport is assured by both, a Phe-Gly (FG) repeat affinity gradient for these transport factors across the NPC and a transport cofactor concentration gradient across the nuclear envelope. This is Nucleoporin nup211 (nup211) from Schizosaccharomyces pombe (strain 972 / ATCC 24843) (Fission yeast).